Consider the following 511-residue polypeptide: Maturase K (511 aa).

It belongs to the intron maturase 2 family. MatK subfamily.

Its subcellular location is the plastid. It localises to the chloroplast. In terms of biological role, usually encoded in the trnK tRNA gene intron. Probably assists in splicing its own and other chloroplast group II introns. The polypeptide is Maturase K (Triticum aestivum (Wheat)).